We begin with the raw amino-acid sequence, 380 residues long: Serpin B7 (380 aa).

Phosphoserine occurs at positions 217 and 223.

The protein belongs to the serpin family. Ov-serpin subfamily. Predominantly expressed in mesangial cells. Expressed in the epidermis of the whole body.

It localises to the cytoplasm. Might function as an inhibitor of Lys-specific proteases. Might influence the maturation of megakaryocytes via its action as a serpin. The protein is Serpin B7 (SERPINB7) of Homo sapiens (Human).